The sequence spans 97 residues: UPF0416 protein RC0826 (97 aa).

An N-terminal signal peptide occupies residues 1-33 (MRIFVKAAISTAAWRFYAHPTVAMGICVGTALA).

The protein belongs to the UPF0416 family.

This is UPF0416 protein RC0826 from Rickettsia conorii (strain ATCC VR-613 / Malish 7).